Reading from the N-terminus, the 1052-residue chain is RIMS-binding protein 2 (1052 aa).

Positions 115–164 are disordered; it reads GEYIRPLPQPGDRPEPLSAKPTFLSRSGSARCRSESDMENERNSNTSKQR. Residues 146–156 are compositionally biased toward basic and acidic residues; the sequence is CRSESDMENER. The SH3 1 domain occupies 167 to 234; sequence GKVHLCVARY…PSNFVDFVQD (68 aa). 3 consecutive Fibronectin type-III domains span residues 297-390, 393-475, and 489-590; these read VPYP…GKDV, APSH…KKEA, and PPQD…VPPT. 5 disordered regions span residues 584 to 615, 629 to 666, 697 to 716, 767 to 787, and 805 to 829; these read ELLVPPTPHPRPAPQSKPLASSGVPETKDEHL, RAPGPVHGHMLEPPVGPGRRSPSPSRILPQPQGTPVST, SAGQYAASDEEDAYDSPDFK, EMQLEDGGRRRPSGTSHNALK, and FPRGSAGPQRSRPVTVPSIDDYGRD. The span at 585–598 shows a compositional bias: pro residues; that stretch reads LLVPPTPHPRPAPQ. Positions 645-654 are enriched in low complexity; the sequence is PGRRSPSPSR. S704 and S712 each carry phosphoserine. S832 and S839 each carry phosphoserine. Phosphothreonine is present on T841. SH3 domains lie at 848–916 and 952–1019; these read LPAR…EIQA and VSTR…EVPD. Positions 1029-1052 are disordered; it reads PSHYSQDTPMRSKAKRKKSVHFTP. Over residues 1040–1052 the composition is skewed to basic residues; it reads SKAKRKKSVHFTP.

It belongs to the RIMBP family. In terms of assembly, interacts with RIMS1, RIMS2, CACNA1D and CACNA1B, and potentially with other Ca(2+) channel alpha-1 isoforms.

It localises to the cell membrane. Its subcellular location is the synapse. Functionally, plays a role in the synaptic transmission as bifunctional linker that interacts simultaneously with RIMS1, RIMS2, CACNA1D and CACNA1B. This Homo sapiens (Human) protein is RIMS-binding protein 2 (RIMBP2).